A 648-amino-acid polypeptide reads, in one-letter code: Mitotic interactor and substrate of PLK1 (648 aa).

Ser-77 is subject to Phosphoserine; by CDK1. 2 positions are modified to phosphothreonine: Thr-149 and Thr-190. Ser-220 bears the Phosphoserine mark. Disordered stretches follow at residues 242–383 (VNDP…PEAR) and 430–460 (KATE…GKAT). Ser-253 is modified (phosphoserine; by CDK1). Residues 255–281 (ETPKETPIEREIRLAQEREAELREQRG) are compositionally biased toward basic and acidic residues. A Phosphothreonine; by CDK1 modification is found at Thr-256. Ser-318 carries the post-translational modification Phosphoserine. The span at 325-339 (MVQETQREEDHRREG) shows a compositional bias: basic and acidic residues. Thr-347 carries the post-translational modification Phosphothreonine; by CDK1. A compositionally biased stretch (polar residues) spans 349–367 (DWPSQDPQPGLQRSLSSDC). A phosphoserine mark is found at Ser-352 and Ser-364. Ser-365 and Ser-439 each carry phosphoserine; by PLK1. Positions 440–450 (ESSGRSLSSKQ) are enriched in polar residues. Phosphoserine is present on residues Ser-507 and Ser-509. Positions 511-534 (DLLEREMESVLRREREVAEERRNA) form a coiled coil. The disordered stretch occupies residues 539 to 568 (VFSPVPAEDESHEQDSRSSSRASGITGSYS). At Ser-541 the chain carries Phosphoserine; by CDK1. Residue Ser-554 is modified to Phosphoserine; by PLK1. Residues 557-568 (SSRASGITGSYS) are compositionally biased toward polar residues. Ser-644 carries the phosphoserine modification.

The protein belongs to the MISP family. Associates with F-actin. Interacts with DCTN1; this interaction regulates DCTN1 distribution at the cell cortex. Interacts with PTK2/FAK and MAPRE1. Post-translationally, phosphorylated by CDK1 and PLK1. CDK1 is the priming kinase for PLK1 phosphorylation. Phosphorylation by PLK1 is required for proper spindle orientation at metaphase.

The protein localises to the cell junction. The protein resides in the focal adhesion. It localises to the cytoplasm. Its subcellular location is the cytoskeleton. It is found in the cell cortex. Functionally, plays a role in mitotic spindle orientation and mitotic progression. Regulates the distribution of dynactin at the cell cortex in a PLK1-dependent manner, thus stabilizing cortical and astral microtubule attachments required for proper mitotic spindle positioning. May link microtubules to the actin cytoskeleton and focal adhesions. May be required for directed cell migration and centrosome orientation. May also be necessary for proper stacking of the Golgi apparatus. In Mus musculus (Mouse), this protein is Mitotic interactor and substrate of PLK1.